The primary structure comprises 226 residues: Potassium/proton antiporter CemA (226 aa).

3 helical membrane-spanning segments follow: residues 7-27 (FTSL…SLSF), 111-131 (IICF…LFIL), and 186-206 (IISG…KYWI).

This sequence belongs to the CemA family.

It localises to the plastid. The protein localises to the chloroplast inner membrane. It carries out the reaction K(+)(in) + H(+)(out) = K(+)(out) + H(+)(in). Contributes to K(+)/H(+) antiport activity by supporting proton efflux to control proton extrusion and homeostasis in chloroplasts in a light-dependent manner to modulate photosynthesis. Prevents excessive induction of non-photochemical quenching (NPQ) under continuous-light conditions. Indirectly promotes efficient inorganic carbon uptake into chloroplasts. This Buxus microphylla (Littleleaf boxwood) protein is Potassium/proton antiporter CemA.